The chain runs to 299 residues: Ribosomal protein L11 methyltransferase (299 aa).

S-adenosyl-L-methionine is bound by residues Thr-139, Gly-166, Asp-188, and Asn-231.

The protein belongs to the methyltransferase superfamily. PrmA family.

It is found in the cytoplasm. The catalysed reaction is L-lysyl-[protein] + 3 S-adenosyl-L-methionine = N(6),N(6),N(6)-trimethyl-L-lysyl-[protein] + 3 S-adenosyl-L-homocysteine + 3 H(+). In terms of biological role, methylates ribosomal protein L11. This Thermosynechococcus vestitus (strain NIES-2133 / IAM M-273 / BP-1) protein is Ribosomal protein L11 methyltransferase.